The chain runs to 414 residues: MASAEIIAVGTELLLGQIVNSNAAFISQELAADGIYVYHHTVVGDNPARLKEVIEIAENRSDILIFTGGLGPTEDDITKQILAAHLQKQLVEDEYHMNKINEYFTSRNRAMTENNKLQAVIIEDSIVLNNDFGFAAGMYLRENNHTYVLLPGPPSEMKPMFTSYANPLLLSESGDQNILESKIMRFFGIGESQLAADLNDLIVTQVNPTIATYAGDNEVVVRITATAKTKEEASRLVKDTEEEILRRDGTFLYGYGEVSLSELVTAMLLEKELTISAAESFTAGLFQAEIARFPGISKIFKGGMVTYSEETKQSILQVSPQVIKEKGVVSAECAKEMAENVSRLCKTDIGISFTGVAGPDSLEGHPAGTIWIGLSVKGYETEAFQFVYGRDRNHNRRRAVKQGFQLIKQFLDAN.

It belongs to the CinA family.

This chain is Putative competence-damage inducible protein, found in Listeria monocytogenes serotype 4a (strain HCC23).